A 432-amino-acid polypeptide reads, in one-letter code: Homogentisate 1,2-dioxygenase (432 aa).

3 residues coordinate Fe cation: His333, Glu339, and His369.

Belongs to the homogentisate dioxygenase family. Requires Fe cation as cofactor.

The catalysed reaction is homogentisate + O2 = 4-maleylacetoacetate + H(+). It functions in the pathway amino-acid degradation; L-phenylalanine degradation; acetoacetate and fumarate from L-phenylalanine: step 4/6. The protein is Homogentisate 1,2-dioxygenase (hgd) of Dictyostelium discoideum (Social amoeba).